The sequence spans 271 residues: Aliphatic sulfonates import ATP-binding protein SsuB (271 aa).

Positions 13–234 constitute an ABC transporter domain; sequence ITLESIGKRY…RKGSAKLAAL (222 aa). 45–52 is an ATP binding site; the sequence is GRSGCGKS. The tract at residues 250-271 is disordered; it reads EASRQGIKASRQGTATSRRVAN. Polar residues predominate over residues 260–271; that stretch reads RQGTATSRRVAN.

Belongs to the ABC transporter superfamily. Aliphatic sulfonates importer (TC 3.A.1.17.2) family. In terms of assembly, the complex is composed of two ATP-binding proteins (SsuB), two transmembrane proteins (SsuC) and a solute-binding protein (SsuA).

The protein localises to the cell inner membrane. The enzyme catalyses ATP + H2O + aliphatic sulfonate-[sulfonate-binding protein]Side 1 = ADP + phosphate + aliphatic sulfonateSide 2 + [sulfonate-binding protein]Side 1.. Functionally, part of the ABC transporter complex SsuABC involved in aliphatic sulfonates import. Responsible for energy coupling to the transport system. The sequence is that of Aliphatic sulfonates import ATP-binding protein SsuB from Yersinia pestis bv. Antiqua (strain Antiqua).